The chain runs to 486 residues: CUGBP Elav-like family member 4 (486 aa).

Residues 1–298 (MYIKMATLAN…AAFAAAQMQQ (298 aa)) form a sufficient for RNA-binding and MSE-dependent splicing activity region. The span at 18–28 (LSTNGLGSSPG) shows a compositional bias: polar residues. 2 disordered regions span residues 18-39 (LSTN…LSHS) and 121-149 (LPGM…QPPS). The RRM 1 domain occupies 54–135 (IKLFIGQIPR…RPIQVKPADS (82 aa)). Polar residues predominate over residues 138–149 (RGGSSCLRQPPS). One can recognise an RRM 2 domain in the interval 152-232 (RKLFVGMLNK…SSLVVKFADT (81 aa)). A necessary for TNNT2 exon 5 inclusion region spans residues 239 to 258 (RRMQQMAGQMGMFNPMAIPF). Positions 404–479 (PQPPPMIPQQ…KRLKVQLKRP (76 aa)) constitute an RRM 3 domain.

Belongs to the CELF/BRUNOL family. Ubiquitous. Strongly expressed in the cerebellum, hippocampus, amygdala, temporal and frontal cortex and frontal lobes.

It localises to the nucleus. Its subcellular location is the cytoplasm. In terms of biological role, RNA-binding protein implicated in the regulation of pre-mRNA alternative splicing. Mediates exon inclusion and/or exclusion in pre-mRNA that are subject to tissue-specific and developmentally regulated alternative splicing. Specifically activates exon 5 inclusion of cardiac isoforms of TNNT2 during heart remodeling at the juvenile to adult transition. Promotes exclusion of both the smooth muscle (SM) and non-muscle (NM) exons in actinin pre-mRNAs. Activates the splicing of MAPT/Tau exon 10. Binds to muscle-specific splicing enhancer (MSE) intronic sites flanking the alternative exon 5 of TNNT2 pre-mRNA. In Homo sapiens (Human), this protein is CUGBP Elav-like family member 4 (CELF4).